Reading from the N-terminus, the 126-residue chain is UPF0102 protein DNO_0639 (126 aa).

It belongs to the UPF0102 family.

This Dichelobacter nodosus (strain VCS1703A) protein is UPF0102 protein DNO_0639.